The primary structure comprises 82 residues: MSEINQTVTRRPFHRRRKTCPFSGANAPKIDYKDIKLLQRYISERGKIVPSRITAVSQKRQRELANAIKRARFLGLLPYVIK.

A disordered region spans residues Met1 to Cys20.

It belongs to the bacterial ribosomal protein bS18 family. In terms of assembly, part of the 30S ribosomal subunit. Forms a tight heterodimer with protein bS6.

Its function is as follows. Binds as a heterodimer with protein bS6 to the central domain of the 16S rRNA, where it helps stabilize the platform of the 30S subunit. The polypeptide is Small ribosomal subunit protein bS18 (Bartonella quintana (strain Toulouse) (Rochalimaea quintana)).